The sequence spans 674 residues: Sodium/myo-inositol cotransporter 2 (674 aa).

Topologically, residues methionine 1–glutamate 25 are extracellular. The helical transmembrane segment at alanine 26–serine 46 threads the bilayer. Topologically, residues threonine 47 to lysine 56 are cytoplasmic. The chain crosses the membrane as a helical span at residues glycine 57–serine 77. At asparagine 78–glutamate 102 the chain is on the extracellular side. Residues leucine 103–glycine 123 form a helical membrane-spanning segment. The Cytoplasmic portion of the chain corresponds to glutamine 124 to arginine 140. Residues isoleucine 141–aspartate 161 form a helical membrane-spanning segment. The Extracellular segment spans residues methionine 162–alanine 180. A helical membrane pass occupies residues isoleucine 181–isoleucine 201. Topologically, residues tyrosine 202–threonine 208 are cytoplasmic. The chain crosses the membrane as a helical span at residues leucine 209–leucine 229. Topologically, residues glutamate 230–proline 272 are extracellular. Residues glycine 273–valine 293 form a helical membrane-spanning segment. Residues glutamine 294–glycine 308 are Cytoplasmic-facing. A helical transmembrane segment spans residues serine 309 to valine 329. Residues serine 330–arginine 374 lie on the Extracellular side of the membrane. Residues glycine 375–serine 397 traverse the membrane as a helical segment. The Cytoplasmic segment spans residues threonine 398 to methionine 418. Residues isoleucine 419 to valine 439 traverse the membrane as a helical segment. Topologically, residues glutamine 440–glutamine 446 are extracellular. A helical membrane pass occupies residues leucine 447–isoleucine 467. The Cytoplasmic segment spans residues methionine 468 to glycine 479. Residues alanine 480 to isoleucine 500 form a helical membrane-spanning segment. Residues tyrosine 501–tyrosine 521 are Extracellular-facing. Residues leucine 522–phenylalanine 542 traverse the membrane as a helical segment. At threonine 543–threonine 653 the chain is on the cytoplasmic side. The tract at residues glutamate 567 to glycine 589 is disordered. A compositionally biased stretch (polar residues) spans threonine 578–glycine 589. Residues leucine 654–alanine 674 form a helical membrane-spanning segment.

Belongs to the sodium:solute symporter (SSF) (TC 2.A.21) family.

It localises to the membrane. It is found in the apical cell membrane. The catalysed reaction is myo-inositol(out) + 2 Na(+)(out) = myo-inositol(in) + 2 Na(+)(in). It catalyses the reaction 1D-chiro-inositol(out) + 2 Na(+)(out) = 1D-chiro-inositol(in) + 2 Na(+)(in). It carries out the reaction D-glucose(out) + 2 Na(+)(out) = D-glucose(in) + 2 Na(+)(in). The enzyme catalyses D-xylose(out) + 2 Na(+)(out) = D-xylose(in) + 2 Na(+)(in). With respect to regulation, MI transport activity inhibited by D-chiro-inositol (DCI), phlorizin (Pz) and sodium (Na(+)). Insulin increases D-chiro-inositol uptake. Functionally, involved in the sodium-dependent cotransport of myo-inositol (MI) with a Na(+):MI stoichiometry of 2:1. Exclusively responsible for apical MI transport and absorption in intestine. Can also transport D-chiro-inositol (DCI) but not L-fucose. Exhibits stereospecific cotransport of both D-glucose and D-xylose. May induce apoptosis through the TNF-alpha, PDCD1 pathway. May play a role in the regulation of MI concentration in serum, involving reabsorption in at least the proximal tubule of the kidney. This chain is Sodium/myo-inositol cotransporter 2, found in Bos taurus (Bovine).